A 242-amino-acid chain; its full sequence is Small ribosomal subunit protein uS2 (242 aa).

The protein belongs to the universal ribosomal protein uS2 family.

This Colwellia psychrerythraea (strain 34H / ATCC BAA-681) (Vibrio psychroerythus) protein is Small ribosomal subunit protein uS2.